Here is a 248-residue protein sequence, read N- to C-terminus: Probable transcriptional regulatory protein Nham_3525 (248 aa).

Residues 1–21 (MAGHSQFKNIMHRKGRQDAQK) form a disordered region.

It belongs to the TACO1 family.

It is found in the cytoplasm. This chain is Probable transcriptional regulatory protein Nham_3525, found in Nitrobacter hamburgensis (strain DSM 10229 / NCIMB 13809 / X14).